The chain runs to 72 residues: MKATELRNFSIEELRKKEKELRRELFNLRFQLAKGELQNVKRMKAVKKDIARILTIITEKTMMSSKGEAHKN.

The protein belongs to the universal ribosomal protein uL29 family.

The protein is Large ribosomal subunit protein uL29 of Thermodesulfovibrio yellowstonii (strain ATCC 51303 / DSM 11347 / YP87).